Reading from the N-terminus, the 760-residue chain is Protein HEADING DATE 3B (760 aa).

2 stretches are compositionally biased toward gly residues: residues 1 to 12 (MATRGGGGGGGG) and 60 to 70 (SGGGGGGGVGG). 4 disordered regions span residues 1-120 (MATR…KINK), 144-169 (SRST…RLAD), 236-262 (VKSR…EKSS), and 285-346 (TGII…IEET). Low complexity predominate over residues 71 to 87 (SPAHSTSAASQSQSQSQ). Residues 94–107 (SLFQPFNVPSNRPG) show a composition bias toward polar residues. A compositionally biased stretch (basic and acidic residues) spans 108 to 120 (HSTEKINSDKINK). Positions 236-248 (VKSRTPLKDKEME) are enriched in basic and acidic residues. Positions 349-355 (KRKRLLE) match the Nuclear localization signal motif. Disordered regions lie at residues 485 to 543 (LQQP…GVQL) and 707 to 760 (FPTV…QRDD). Polar residues-rich tracts occupy residues 511–522 (QRDQAATNGVSK), 531–543 (ASDN…GVQL), and 707–730 (FPTV…QTNV).

Expressed in mesophyll cells of young leaves, anthers, stigmas and the top of lemmas.

It is found in the nucleus. Its function is as follows. Involved in the regulation of flowering time under short day (SD) and long day (LD) conditions. Functions as a floral promoter by negatively regulating GHD7, a repressor of the photoperiodic control of flowering. Acts as a floral activator in the LD photoperiodic pathway. Involved in blue light-induced activation of EHD1 expression to promote flowering under SD conditions. This is Protein HEADING DATE 3B (HD3B) from Oryza sativa subsp. japonica (Rice).